We begin with the raw amino-acid sequence, 428 residues long: Methyl-branched lipid omega-hydroxylase (428 aa).

Cys379 contributes to the heme binding site.

The protein belongs to the cytochrome P450 family. Heme serves as cofactor.

The catalysed reaction is a methyl-branched lipid + O2 + 2 reduced ferredoxin [iron-sulfur] cluster + 2 H(+) = an omega-hydroxy-methyl-branched lipid + H2O + 2 oxidized ferredoxin [iron-sulfur] cluster.. The enzyme catalyses cholest-4-en-3-one + 6 reduced [2Fe-2S]-[ferredoxin] + 3 O2 + 5 H(+) = (25R)-3-oxocholest-4-en-26-oate + 6 oxidized [2Fe-2S]-[ferredoxin] + 4 H2O. The protein operates within lipid metabolism; branched-chain fatty acid metabolism. In terms of biological role, primarily hydroxylates the omega-carbon of a number of methyl-branched lipids, including (2E,6E)-farnesol, phytanate, geranylgeraniol, 15-methylpalmitate and (2E,6E)-farnesyl diphosphate. Also catalyzes the sequential oxidation of the terminal methyl of cholest-4-en-3-one into (25R)-26-hydroxycholest-4-en-3-one (alcohol), (25R)-26-oxocholest-4-en-3-one (aldehyde), to finally yield the carboxylic acid (25R)-3-oxocholest-4-en-26-oate. Also able to sequentially oxidize cholesterol itself, not only cholest-4-en-3-one. The protein is Methyl-branched lipid omega-hydroxylase (cyp124) of Mycobacterium tuberculosis (strain CDC 1551 / Oshkosh).